The following is a 597-amino-acid chain: Arginine--tRNA ligase (597 aa).

A 'HIGH' region motif is present at residues 125 to 135 (PNTNKPLHLGH).

It belongs to the class-I aminoacyl-tRNA synthetase family. In terms of assembly, monomer.

The protein localises to the cytoplasm. It carries out the reaction tRNA(Arg) + L-arginine + ATP = L-arginyl-tRNA(Arg) + AMP + diphosphate. This Porphyromonas gingivalis (strain ATCC BAA-308 / W83) protein is Arginine--tRNA ligase.